Reading from the N-terminus, the 564-residue chain is Agglutinin (564 aa).

The N-terminal stretch at 1 to 24 (MYAVATWLCFGSTSGWSFTLEDNN) is a signal peptide. Beta-D-galactose is bound at residue 32–34 (IIN). N-linked (GlcNAc...) asparagine glycosylation occurs at asparagine 34. Residues tyrosine 104, tyrosine 147, glutamate 200, and arginine 203 contribute to the active site. AMP is bound by residues 104–105 (YV) and 145–147 (GNY). A glycan (N-linked (GlcNAc...) asparagine) is linked at asparagine 259. Cysteine 282 and cysteine 306 are joined by a disulfide. Residues 291 to 302 (SLLIRPVVPNFN) constitute a propeptide, linker peptide. The region spanning 309-436 (PEPIVRIVGR…YAVSQGWLPT (128 aa)) is the Ricin B-type lectin 1 domain. Beta-D-galactose is bound by residues isoleucine 312, 324–328 (DVTGE), glutamine 337, lysine 342, and asparagine 348. Residues 319 to 361 (NGLCVDVTGEEFFDGNPIQLWPCKSNTDWNQLWTLRKDSTIRS) form a 1-alpha repeat. A disulfide bridge connects residues cysteine 322 and cysteine 341. The 1-beta repeat unit spans residues 362–402 (NGKCLTISKSSPRQQVVIYNCSTATVGATRWQIWDNRTIIN). The cysteines at positions 365 and 382 are disulfide-linked. Asparagine 397 and asparagine 437 each carry an N-linked (GlcNAc...) asparagine glycan. The stretch at 405 to 437 (SGLVLAATSGNSGTKLTVQTNIYAVSQGWLPTN) is one 1-gamma repeat. Residue asparagine 437 coordinates beta-D-galactose. The region spanning 439 to 563 (TQPFVTTIVG…GNLNQIWLPL (125 aa)) is the Ricin B-type lectin 2 domain. One copy of the 2-alpha repeat lies at 450–485 (YGMCLQANSGKVWLEDCTSEKAEQQWALYADGSIRP). Disulfide bonds link cysteine 453–cysteine 466 and cysteine 492–cysteine 509. A 2-beta repeat occupies 489-528 (RDNCLTTDANIKGTVVKILSCGPASSGQRWMFKNDGTILN). The stretch at 531–558 (NGLVLDVRRSDPSLKQIIVHPFHGNLNQ) is one 2-gamma repeat.

It in the N-terminal section; belongs to the ribosome-inactivating protein family. Type 2 RIP subfamily.

The catalysed reaction is Endohydrolysis of the N-glycosidic bond at one specific adenosine on the 28S rRNA.. This chain is Agglutinin, found in Ricinus communis (Castor bean).